The primary structure comprises 452 residues: Rhodopsin (452 aa).

Topologically, residues 1-33 (MGRDIPDNETWWYNPYMDIHPHWKQFDQVPAAV) are extracellular. An N-linked (GlcNAc...) asparagine glycan is attached at Asn-8. The helical transmembrane segment at 34-58 (YYSLGIFIAICGIIGCVGNGVVIYL) threads the bilayer. Over 59-70 (FTKTKSLQTPAN) the chain is Cytoplasmic. A helical transmembrane segment spans residues 71–97 (MFIINLAFSDFTFSLVNGFPLMTISCF). The Extracellular segment spans residues 98–109 (MKYWVFGNAACK). A disulfide bond links Cys-108 and Cys-186. Residues 110-131 (VYGLIGGIFGLMSIMTMTMISI) traverse the membrane as a helical segment. The short motif at 132-134 (DRY) is the 'Ionic lock' involved in activated form stabilization element. The Cytoplasmic segment spans residues 132–151 (DRYNVIGRPMSASKKMSHRK). Residues 152 to 172 (AFIMIIFVWIWSTIWAIGPIF) traverse the membrane as a helical segment. The Extracellular segment spans residues 173–199 (GWGAYTLEGVLCNCSFDYITRDTTTRS). A helical transmembrane segment spans residues 200–224 (NILCMYIFAFMCPIVVIFFCYFNIV). At 225–261 (MSVSNHEKEMAAMAKRLNAKELRKAQAGANAEMKLAK) the chain is on the cytoplasmic side. The helical transmembrane segment at 262 to 283 (ISIVIVTQFLLSWSPYAVVALL) threads the bilayer. Residues 284–293 (AQFGPIEWVT) are Extracellular-facing. The helical transmembrane segment at 294-315 (PYAAQLPVMFAKASAIHNPMIY) threads the bilayer. The residue at position 305 (Lys-305) is an N6-(retinylidene)lysine. At 316 to 452 (SVSHPKFRER…QGVDNQAYQA (137 aa)) the chain is on the cytoplasmic side. 2 S-palmitoyl cysteine lipidation sites follow: Cys-336 and Cys-337. Disordered regions lie at residues 346-365 (DDKD…GETA) and 376-452 (MMQK…AYQA). A compositionally biased stretch (low complexity) spans 376-388 (MMQKMQAQQQQQP). Residues 389-440 (AYPPQGYPPQGYPPPPPQGYPPQGYPPQGYPPQGYPPPPQGPPPQGPPPQAA) show a composition bias toward pro residues.

Belongs to the G-protein coupled receptor 1 family. Opsin subfamily. In terms of processing, contains one covalently linked retinal chromophore. Upon light absorption, the covalently bound 11-cis-retinal is converted to all-trans-retinal. After hydrolysis of the Schiff base and release of the covalently bound all-trans-retinal, active rhodopsin is regenerated by binding of a fresh molecule of 11-cis-retinal.

Its subcellular location is the cell projection. It localises to the rhabdomere membrane. Photoreceptor required for image-forming vision at low light intensity. Light-induced isomerization of 11-cis to all-trans retinal triggers a conformational change that activates signaling via G-proteins. Signaling mediates the activation of phospholipase C. Subsequent receptor phosphorylation mediates displacement of the bound G-protein alpha subunit by arrestin and terminates signaling. The polypeptide is Rhodopsin (RHO) (Loligo forbesii (Veined squid)).